The primary structure comprises 330 residues: Putative 4-hydroxythreonine-4-phosphate dehydrogenase (330 aa).

A divalent metal cation-binding residues include histidine 169, histidine 213, and histidine 263.

This sequence belongs to the PdxA family. In terms of assembly, homodimer. Requires Zn(2+) as cofactor. Mg(2+) serves as cofactor. It depends on Co(2+) as a cofactor.

Its subcellular location is the cytoplasm. The catalysed reaction is 4-(phosphooxy)-L-threonine + NAD(+) = 3-amino-2-oxopropyl phosphate + CO2 + NADH. Its pathway is cofactor biosynthesis; pyridoxine 5'-phosphate biosynthesis; pyridoxine 5'-phosphate from D-erythrose 4-phosphate: step 4/5. In terms of biological role, catalyzes the NAD(P)-dependent oxidation of 4-(phosphooxy)-L-threonine (HTP) into 2-amino-3-oxo-4-(phosphooxy)butyric acid which spontaneously decarboxylates to form 3-amino-2-oxopropyl phosphate (AHAP). The polypeptide is Putative 4-hydroxythreonine-4-phosphate dehydrogenase (Novosphingobium aromaticivorans (Sphingomonas aromaticivorans)).